The primary structure comprises 106 residues: MQFFTVATLFLATAFAAPSVDTNGNGIAPRLAANFCPPGLLYSNPQCCQIDVLGVADLDCVSPPSGPSKCKTFAGICDKIGRQPKCCVVPVAGQALLCTDPVGANN.

A signal peptide spans 1-16 (MQFFTVATLFLATAFA). Cystine bridges form between Cys36/Cys86, Cys47/Cys77, Cys48/Cys60, and Cys87/Cys98.

It belongs to the cerato-ulmin hydrophobin family. Homodimer. Homodimers further self-assemble to form highly ordered films at water-air interfaces through intermolecular interactions.

It localises to the secreted. It is found in the cell wall. Its function is as follows. Aerial growth, conidiation, and dispersal of filamentous fungi in the environment rely upon a capability of their secreting small amphipathic proteins called hydrophobins (HPBs) with low sequence identity. Class I can self-assemble into an outermost layer of rodlet bundles on aerial cell surfaces, conferring cellular hydrophobicity that supports fungal growth, development and dispersal; whereas Class II form highly ordered films at water-air interfaces through intermolecular interactions but contribute nothing to the rodlet structure. HFB2-6 is a class II hydrophobin that has a function in root colonization. Acts as an effector in poplar by up-regulating the expression of genes related to both the jasmonic acid and salicylic acid signal transduction pathways, which not only causes induced systemic resistance (ISR), but also systemic acquired resistance (SAR), giving poplar broad-spectrum resistance to pathogens. Also induces genes related to auxin signal transduction to promote poplar growth. Plays roles in interactions with both biotic and abiotic environmental conditions such as the presence of the pathogen Alternaria alternata or nutrient starvation conditions. In Trichoderma asperellum (strain ATCC 204424 / CBS 433.97 / NBRC 101777), this protein is Class II hydrophobin 6.